The primary structure comprises 85 residues: N.vectensis toxin 1 4 (85 aa).

The N-terminal stretch at 1–20 (MASFKIVIVCLALLVAVASA) is a signal peptide. Positions 21–36 (RRRDMMSDDELDYHYS) are excised as a propeptide. 3 cysteine pairs are disulfide-bonded: Cys42–Cys82, Cys44–Cys72, and Cys65–Cys83.

It belongs to the sea anemone sodium channel inhibitory toxin family. Type II subfamily. As to expression, expressed in ectodermal glands and in clumps outside of the extodermal layer. Is not expressed in nematocytes. In adult female tissues, shows similar expression levels in mesenteries (gametes-producing tissue), tentacles, pharynx and physa.

The protein localises to the secreted. Its function is as follows. Binds to site 3 of voltage-gated sodium channels and inhibits the inactivation process. Is highly active on DmNav1/TipE (drosophila) and is only extremely weakly active on rat Nav1.4-beta-1/SCN4A-SCN1B, and on human Nav1.5-beta-1/SCN5A-beta-1. This reveals high specificity for arthropod over mammalian channels. In vivo, when released into the medium, this recombinant toxin induces impaired swimming, paralysis and death of the crustacean A.nauplii within several hours. Also causes paralysis of cherry shrimps immediately after injection at very low doses. Its effect on zebrafish (D.rerio) larvae is also rapid, since it induces tail twitching accompanied by impaired swimming after 20 minutes and complete paralysis within 45 minutes. It has also been observed to cause death of zebrafish larvae within 1 hour. This chain is N.vectensis toxin 1 4, found in Nematostella vectensis (Starlet sea anemone).